A 155-amino-acid polypeptide reads, in one-letter code: Small ribosomal subunit protein uS7 (155 aa).

The protein belongs to the universal ribosomal protein uS7 family. In terms of assembly, part of the 30S ribosomal subunit. Contacts proteins S9 and S11.

In terms of biological role, one of the primary rRNA binding proteins, it binds directly to 16S rRNA where it nucleates assembly of the head domain of the 30S subunit. Is located at the subunit interface close to the decoding center, probably blocks exit of the E-site tRNA. This chain is Small ribosomal subunit protein uS7, found in Prosthecochloris aestuarii (strain DSM 271 / SK 413).